The primary structure comprises 289 residues: Proteasome subunit beta (289 aa).

Residues 1-55 (MTWPLPDRLSINSAISGSAVDLSSFAEFLRRQAPELLPASIKHGGGAVGDQLPHA) constitute a propeptide, removed in mature form; by autocatalysis. The Nucleophile role is filled by threonine 56.

It belongs to the peptidase T1B family. In terms of assembly, the 20S proteasome core is composed of 14 alpha and 14 beta subunits that assemble into four stacked heptameric rings, resulting in a barrel-shaped structure. The two inner rings, each composed of seven catalytic beta subunits, are sandwiched by two outer rings, each composed of seven alpha subunits. The catalytic chamber with the active sites is on the inside of the barrel. Has a gated structure, the ends of the cylinder being occluded by the N-termini of the alpha-subunits. Is capped by the proteasome-associated ATPase, ARC.

The protein localises to the cytoplasm. It carries out the reaction Cleavage of peptide bonds with very broad specificity.. Its pathway is protein degradation; proteasomal Pup-dependent pathway. Its activity is regulated as follows. The formation of the proteasomal ATPase ARC-20S proteasome complex, likely via the docking of the C-termini of ARC into the intersubunit pockets in the alpha-rings, may trigger opening of the gate for substrate entry. Interconversion between the open-gate and close-gate conformations leads to a dynamic regulation of the 20S proteasome proteolysis activity. Component of the proteasome core, a large protease complex with broad specificity involved in protein degradation. The chain is Proteasome subunit beta from Mycobacterium marinum (strain ATCC BAA-535 / M).